We begin with the raw amino-acid sequence, 650 residues long: Acetyl-coenzyme A synthetase (650 aa).

CoA is bound by residues arginine 191 to arginine 194, threonine 311, and asparagine 335. ATP is bound by residues glycine 387 to proline 389, aspartate 411 to threonine 416, aspartate 501, and arginine 516. Residue serine 524 participates in CoA binding. Arginine 527 lines the ATP pocket. Mg(2+)-binding residues include valine 538, histidine 540, and isoleucine 543. Arginine 585 is a binding site for CoA. Lysine 610 bears the N6-acetyllysine mark.

The protein belongs to the ATP-dependent AMP-binding enzyme family. The cofactor is Mg(2+). In terms of processing, acetylated. Deacetylation by the SIR2-homolog deacetylase activates the enzyme.

It catalyses the reaction acetate + ATP + CoA = acetyl-CoA + AMP + diphosphate. In terms of biological role, catalyzes the conversion of acetate into acetyl-CoA (AcCoA), an essential intermediate at the junction of anabolic and catabolic pathways. AcsA undergoes a two-step reaction. In the first half reaction, AcsA combines acetate with ATP to form acetyl-adenylate (AcAMP) intermediate. In the second half reaction, it can then transfer the acetyl group from AcAMP to the sulfhydryl group of CoA, forming the product AcCoA. This is Acetyl-coenzyme A synthetase from Vibrio vulnificus (strain YJ016).